The sequence spans 289 residues: UPF0725 protein At1g27860 (289 aa).

The disordered stretch occupies residues 266 to 289 (DQQRSMTLPSGEQAESSKKRPRLS). The segment covering 268–279 (QRSMTLPSGEQA) has biased composition (polar residues).

It belongs to the UPF0725 (EMB2204) family.

This chain is UPF0725 protein At1g27860, found in Arabidopsis thaliana (Mouse-ear cress).